The following is a 471-amino-acid chain: MSSGSRSFFTPQETRLELPQGAAHQTPDITRPASPSENDRAPFLNGGPSDAREDVRMGAKALRNDSEKPAVGIMALAPILCYCAASITMTVVNKFTVSGRGFNMNLLVLLIQSTVGVTCVWIAERAGLIQLRGLNAKDAWNWMPLSIMLVFVIWTGSKALQYLNISVYTIFKNLTIILIAYGEVMWFGGRVTRIVLCSFLFMVLSSVIAAWSDISNVFAIGNLSMPHTPDSIMGGMAKDPITGALFPAFDPLKTEKDAINAQLQSASANDVIEGFQGYGLLSSGYVWMALNCICSATYVLLMRKRIKVTGFKDWDTMFYNNFLSIPVLLLMSFLVEDWSYANLHKNFPDDKQTKLISAIVFSGACAILISYTTAWCIRATSSTTYSMVGALNKLPVALSGMVFFHDPPVTFSSVSAIAVGFFAGLVYAFGKNKQAEAAKLGGHASANGSSSMSGSKDGSSLPMHTFNDRKD.

Polar residues predominate over residues 1–13 (MSSGSRSFFTPQE). Positions 1–52 (MSSGSRSFFTPQETRLELPQGAAHQTPDITRPASPSENDRAPFLNGGPSDAR) are disordered. At 1 to 70 (MSSGSRSFFT…ALRNDSEKPA (70 aa)) the chain is on the cytoplasmic side. Residues 71-91 (VGIMALAPILCYCAASITMTV) form a helical membrane-spanning segment. The Lumenal portion of the chain corresponds to 92–101 (VNKFTVSGRG). Residues 102–122 (FNMNLLVLLIQSTVGVTCVWI) traverse the membrane as a helical segment. At 123 to 139 (AERAGLIQLRGLNAKDA) the chain is on the cytoplasmic side. A helical transmembrane segment spans residues 140 to 160 (WNWMPLSIMLVFVIWTGSKAL). The Lumenal segment spans residues 161–166 (QYLNIS). N-linked (GlcNAc...) asparagine glycosylation occurs at Asn-164. The helical transmembrane segment at 167-187 (VYTIFKNLTIILIAYGEVMWF) threads the bilayer. Over 188-193 (GGRVTR) the chain is Cytoplasmic. The helical transmembrane segment at 194–214 (IVLCSFLFMVLSSVIAAWSDI) threads the bilayer. At 215–279 (SNVFAIGNLS…DVIEGFQGYG (65 aa)) the chain is on the lumenal side. Asn-222 carries an N-linked (GlcNAc...) asparagine glycan. The chain crosses the membrane as a helical span at residues 280–300 (LLSSGYVWMALNCICSATYVL). Over 301 to 315 (LMRKRIKVTGFKDWD) the chain is Cytoplasmic. Residues 316-336 (TMFYNNFLSIPVLLLMSFLVE) form a helical membrane-spanning segment. Residues 337-354 (DWSYANLHKNFPDDKQTK) are Lumenal-facing. A helical transmembrane segment spans residues 355-375 (LISAIVFSGACAILISYTTAW). The Cytoplasmic portion of the chain corresponds to 376 to 383 (CIRATSST). Residues 384–404 (TYSMVGALNKLPVALSGMVFF) traverse the membrane as a helical segment. The Lumenal segment spans residues 405–408 (HDPP). A helical membrane pass occupies residues 409 to 429 (VTFSSVSAIAVGFFAGLVYAF). Topologically, residues 430–471 (GKNKQAEAAKLGGHASANGSSSMSGSKDGSSLPMHTFNDRKD) are cytoplasmic. The span at 442–460 (GHASANGSSSMSGSKDGSS) shows a compositional bias: low complexity. The tract at residues 442 to 471 (GHASANGSSSMSGSKDGSSLPMHTFNDRKD) is disordered.

The protein belongs to the TPT transporter family. SLC35D subfamily. Homooligomer.

It localises to the golgi apparatus membrane. The protein resides in the cytoplasmic vesicle membrane. The protein localises to the endoplasmic reticulum membrane. Functionally, involved in the import of GDP-mannose from the cytoplasm into the Golgi lumen. The chain is GDP-mannose transporter (VRG4) from Mycosarcoma maydis (Corn smut fungus).